We begin with the raw amino-acid sequence, 329 residues long: Methionyl-tRNA formyltransferase (329 aa).

118–121 (SLLP) is a (6S)-5,6,7,8-tetrahydrofolate binding site.

This sequence belongs to the Fmt family.

It carries out the reaction L-methionyl-tRNA(fMet) + (6R)-10-formyltetrahydrofolate = N-formyl-L-methionyl-tRNA(fMet) + (6S)-5,6,7,8-tetrahydrofolate + H(+). In terms of biological role, attaches a formyl group to the free amino group of methionyl-tRNA(fMet). The formyl group appears to play a dual role in the initiator identity of N-formylmethionyl-tRNA by promoting its recognition by IF2 and preventing the misappropriation of this tRNA by the elongation apparatus. This is Methionyl-tRNA formyltransferase from Corynebacterium urealyticum (strain ATCC 43042 / DSM 7109).